Here is a 354-residue protein sequence, read N- to C-terminus: Guanine nucleotide-binding protein G(o) subunit alpha (354 aa).

The N-myristoyl glycine moiety is linked to residue Gly-2. The S-palmitoyl cysteine moiety is linked to residue Cys-3. One can recognise a G-alpha domain in the interval 32–354 (KDVKLLLLGA…ANNLRGCGLY (323 aa)). The tract at residues 35-48 (KLLLLGAGESGKST) is G1 motif. GTP-binding residues include Glu-43, Lys-46, Ser-47, Thr-48, Ser-152, Leu-176, Arg-177, Thr-178, and Arg-179. Ser-47 lines the Mg(2+) pocket. The interval 174–182 (DILRTRVKT) is G2 motif. Position 179 is an ADP-ribosylarginine; by cholera toxin (Arg-179). Thr-182 is a binding site for Mg(2+). Residues 197–206 (FRLFDVGGQR) form a G3 motif region. At Gln-205 the chain carries 5-glutamyl histamine. The segment at 266–273 (ILFLNKKD) is G4 motif. Residues Asn-270, Asp-273, and Cys-325 each contribute to the GTP site. The G5 motif stretch occupies residues 324 to 329 (TCATDT). A lipid anchor (S-palmitoyl cysteine) is attached at Cys-351. Cys-351 is modified (ADP-ribosylcysteine; by pertussis toxin).

This sequence belongs to the G-alpha family. G(i/o/t/z) subfamily. G proteins are composed of 3 units; alpha, beta and gamma. The alpha chain contains the guanine nucleotide binding site. Forms a complex with GNB1 and GNG3. Interacts with RGS14. Interacts with RGS16. Interacts with RGS19. Interacts (when palmitoylated) with ADGRG3. Post-translationally, histaminylated at Gln-205 residues by TGM2. In terms of processing, palmitoylated at Cys-351, leading to binding to ADGRG3.

The protein resides in the cell membrane. It localises to the membrane. It catalyses the reaction GTP + H2O = GDP + phosphate + H(+). With respect to regulation, the GTPase activity is promoted by GTPAse activators, such as RGS14, RGS16 and RGS19. Its function is as follows. Guanine nucleotide-binding proteins (G proteins) function as transducers downstream of G protein-coupled receptors (GPCRs) in numerous signaling cascades. The alpha chain contains the guanine nucleotide binding site and alternates between an active, GTP-bound state and an inactive, GDP-bound state. Signaling by an activated GPCR promotes GDP release and GTP binding. The alpha subunit has a low GTPase activity that converts bound GTP to GDP, thereby terminating the signal. Both GDP release and GTP hydrolysis are modulated by numerous regulatory proteins. Signaling is mediated via effector proteins, such as adenylate cyclase. Inhibits adenylate cyclase activity, leading to decreased intracellular cAMP levels. This is Guanine nucleotide-binding protein G(o) subunit alpha (GNAO1) from Homo sapiens (Human).